The primary structure comprises 178 residues: UPF0114 protein HPSH_00970 (178 aa).

Helical transmembrane passes span tryptophan 15–phenylalanine 35, leucine 54–valine 74, phenylalanine 102–leucine 122, and proline 145–valine 165.

Belongs to the UPF0114 family.

Its subcellular location is the cell membrane. In Helicobacter pylori (strain Shi470), this protein is UPF0114 protein HPSH_00970.